The following is a 251-amino-acid chain: Cathelicidin-B1 (251 aa).

A signal peptide spans 1–20 (MGRMWASEVLLLLLLGSSRA). Residues 21 to 211 (VTPGLDVSTA…ELRCRPLRPQ (191 aa)) constitute a propeptide that is removed on maturation. Positions 29–109 (TAPGLDGSIP…TITPKQDGSI (81 aa)) are disordered. 2 disulfide bridges follow: cysteine 172–cysteine 181 and cysteine 189–cysteine 205.

This sequence belongs to the cathelicidin family. As to expression, detected in bursa of Fabricius, in filamentous structures surrounding the basal and lateral surfaces of bursal M cells (at protein level). Detected in bursa of Fabricius, in secretory enterocytes of the interfollicular bursal epithelium, but not in M cells.

It localises to the secreted. In terms of biological role, has potent antimicrobial activity against Gram-positive and Gram-negative bacteria (in vitro). May play a role in the innate immune response. The chain is Cathelicidin-B1 (CATHB1) from Gallus gallus (Chicken).